The sequence spans 279 residues: Beta-porphyranase E (279 aa).

Residues 1-18 (MGNTMLLTLLLVVVAAYG) form the signal peptide. The GH16 domain maps to 19–277 (QTPPPPEGFR…WVRSYTLLPV (259 aa)). Substrate contacts are provided by W56, R60, E141, E146, and E243. The active-site Nucleophile is the E141. E146 serves as the catalytic Proton donor.

The protein belongs to the glycosyl hydrolase 16 family.

It localises to the periplasm. It carries out the reaction Hydrolysis of beta-D-galactopyranose-(1-&gt;4)-alpha-L-galactopyranose-6-sulfate linkages in porphyran.. In terms of biological role, cleaves the sulfated polysaccharide porphyran at the (1-&gt;4) linkages between beta-D-galactopyranose and alpha-L-galactopyranose-6-sulfate, forming mostly the disaccharide alpha-L-galactopyranose-6-sulfate-(1-&gt;3)-beta-D-galactose. The sequence is that of Beta-porphyranase E (porE) from Zobellia galactanivorans (strain DSM 12802 / CCUG 47099 / CIP 106680 / NCIMB 13871 / Dsij).